Consider the following 578-residue polypeptide: Proline--tRNA ligase (578 aa).

This sequence belongs to the class-II aminoacyl-tRNA synthetase family. ProS type 1 subfamily. Homodimer.

It localises to the cytoplasm. It carries out the reaction tRNA(Pro) + L-proline + ATP = L-prolyl-tRNA(Pro) + AMP + diphosphate. Its function is as follows. Catalyzes the attachment of proline to tRNA(Pro) in a two-step reaction: proline is first activated by ATP to form Pro-AMP and then transferred to the acceptor end of tRNA(Pro). As ProRS can inadvertently accommodate and process non-cognate amino acids such as alanine and cysteine, to avoid such errors it has two additional distinct editing activities against alanine. One activity is designated as 'pretransfer' editing and involves the tRNA(Pro)-independent hydrolysis of activated Ala-AMP. The other activity is designated 'posttransfer' editing and involves deacylation of mischarged Ala-tRNA(Pro). The misacylated Cys-tRNA(Pro) is not edited by ProRS. This Burkholderia ambifaria (strain ATCC BAA-244 / DSM 16087 / CCUG 44356 / LMG 19182 / AMMD) (Burkholderia cepacia (strain AMMD)) protein is Proline--tRNA ligase.